The following is a 598-amino-acid chain: uncharacterized protein (598 aa).

This is an uncharacterized protein from Homo sapiens (Human).